The primary structure comprises 87 residues: Selenoprotein W (87 aa).

Positions 10–13 (CGAU) form a cross-link, cysteinyl-selenocysteine (Cys-Sec); redox-active. A non-standard amino acid (selenocysteine) is located at residue selenocysteine 13. Cysteine 37 is modified (S-glutathionyl cysteine).

The protein belongs to the SelWTH family. Selenoprotein W subfamily. In terms of assembly, interacts with DPYSL2, PRDX1, YWHAB, YWHAG, HSP70 and HSP90. As to expression, highest levels detected in skeletal muscle, tongue, heart and brain. Expressed at significantly higher levels in female skeletal muscle than in male and at slightly higher levels in female cardiac muscle than in male (at protein level). Also detected at low levels in liver.

It is found in the cytoplasm. Plays a role as a glutathione (GSH)-dependent antioxidant. May be involved in a redox-related process. May play a role in the myopathies of selenium deficiency. This is Selenoprotein W from Macaca mulatta (Rhesus macaque).